A 345-amino-acid chain; its full sequence is Uroporphyrinogen decarboxylase (345 aa).

Substrate-binding positions include 27-31 (RQAGR), F46, D76, Y152, S207, and H321.

Belongs to the uroporphyrinogen decarboxylase family. In terms of assembly, homodimer.

Its subcellular location is the cytoplasm. The catalysed reaction is uroporphyrinogen III + 4 H(+) = coproporphyrinogen III + 4 CO2. The protein operates within porphyrin-containing compound metabolism; protoporphyrin-IX biosynthesis; coproporphyrinogen-III from 5-aminolevulinate: step 4/4. Catalyzes the decarboxylation of four acetate groups of uroporphyrinogen-III to yield coproporphyrinogen-III. The chain is Uroporphyrinogen decarboxylase from Staphylococcus aureus (strain bovine RF122 / ET3-1).